Consider the following 245-residue polypeptide: Transcriptional activator protein ExpR (245 aa).

Residues R173–Q238 form the HTH luxR-type domain. The segment at residues Y197–G216 is a DNA-binding region (H-T-H motif).

It belongs to the autoinducer-regulated transcriptional regulatory protein family.

Functionally, functions as an OHLL responsive transcriptional regulator that acts in virulence (soft rot disease) through the activation of genes for plant tissue macerating enzymes. This is Transcriptional activator protein ExpR (expR) from Pectobacterium parmentieri.